The primary structure comprises 245 residues: Ubiquinone/menaquinone biosynthesis C-methyltransferase UbiE (245 aa).

Residues T71, D92, and 118 to 119 (DA) each bind S-adenosyl-L-methionine.

It belongs to the class I-like SAM-binding methyltransferase superfamily. MenG/UbiE family.

The catalysed reaction is a 2-demethylmenaquinol + S-adenosyl-L-methionine = a menaquinol + S-adenosyl-L-homocysteine + H(+). It carries out the reaction a 2-methoxy-6-(all-trans-polyprenyl)benzene-1,4-diol + S-adenosyl-L-methionine = a 5-methoxy-2-methyl-3-(all-trans-polyprenyl)benzene-1,4-diol + S-adenosyl-L-homocysteine + H(+). It participates in quinol/quinone metabolism; menaquinone biosynthesis; menaquinol from 1,4-dihydroxy-2-naphthoate: step 2/2. The protein operates within cofactor biosynthesis; ubiquinone biosynthesis. Functionally, methyltransferase required for the conversion of demethylmenaquinol (DMKH2) to menaquinol (MKH2) and the conversion of 2-polyprenyl-6-methoxy-1,4-benzoquinol (DDMQH2) to 2-polyprenyl-3-methyl-6-methoxy-1,4-benzoquinol (DMQH2). This is Ubiquinone/menaquinone biosynthesis C-methyltransferase UbiE from Neisseria gonorrhoeae (strain ATCC 700825 / FA 1090).